A 353-amino-acid chain; its full sequence is Photosystem II protein D1 (353 aa).

Thr-2 carries the post-translational modification N-acetylthreonine. Thr-2 is subject to Phosphothreonine. 3 consecutive transmembrane segments (helical) span residues 29–46 (YIGWFGVLMIPTLLTATS), 118–133 (HFLLGVACYMGREWEL), and 142–156 (WIAVAYSAPVAAATA). Residue His-118 coordinates chlorophyll a. Tyr-126 lines the pheophytin a pocket. Positions 170 and 189 each coordinate [CaMn4O5] cluster. A helical transmembrane segment spans residues 197–218 (FHMLGVAGVFGGSLFSAMHGSL). His-198 is a chlorophyll a binding site. Residues His-215 and 264–265 (SF) contribute to the a quinone site. Residue His-215 participates in Fe cation binding. Residue His-272 participates in Fe cation binding. A helical transmembrane segment spans residues 274 to 288 (FLAAWPVVGIWFTAL). [CaMn4O5] cluster is bound by residues His-332, Glu-333, Asp-342, and Ala-344. A propeptide spanning residues 345–353 (AVEAPSTNG) is cleaved from the precursor.

The protein belongs to the reaction center PufL/M/PsbA/D family. In terms of assembly, PSII is composed of 1 copy each of membrane proteins PsbA, PsbB, PsbC, PsbD, PsbE, PsbF, PsbH, PsbI, PsbJ, PsbK, PsbL, PsbM, PsbT, PsbX, PsbY, PsbZ, Psb30/Ycf12, at least 3 peripheral proteins of the oxygen-evolving complex and a large number of cofactors. It forms dimeric complexes. The D1/D2 heterodimer binds P680, chlorophylls that are the primary electron donor of PSII, and subsequent electron acceptors. It shares a non-heme iron and each subunit binds pheophytin, quinone, additional chlorophylls, carotenoids and lipids. D1 provides most of the ligands for the Mn4-Ca-O5 cluster of the oxygen-evolving complex (OEC). There is also a Cl(-1) ion associated with D1 and D2, which is required for oxygen evolution. The PSII complex binds additional chlorophylls, carotenoids and specific lipids. is required as a cofactor. Tyr-161 forms a radical intermediate that is referred to as redox-active TyrZ, YZ or Y-Z. In terms of processing, C-terminally processed by CTPA; processing is essential to allow assembly of the oxygen-evolving complex and thus photosynthetic growth.

It localises to the plastid. It is found in the chloroplast thylakoid membrane. It catalyses the reaction 2 a plastoquinone + 4 hnu + 2 H2O = 2 a plastoquinol + O2. Functionally, photosystem II (PSII) is a light-driven water:plastoquinone oxidoreductase that uses light energy to abstract electrons from H(2)O, generating O(2) and a proton gradient subsequently used for ATP formation. It consists of a core antenna complex that captures photons, and an electron transfer chain that converts photonic excitation into a charge separation. The D1/D2 (PsbA/PsbD) reaction center heterodimer binds P680, the primary electron donor of PSII as well as several subsequent electron acceptors. The protein is Photosystem II protein D1 of Ceratophyllum demersum (Rigid hornwort).